A 399-amino-acid chain; its full sequence is Phosphoprotein (399 aa).

Composition is skewed to polar residues over residues 30 to 46 and 82 to 112; these read ATSQ…SSRT and GRQN…LPSP. Positions 30–112 are disordered; the sequence is ATSQSSLNKP…MGSDTQLPSP (83 aa). Residues 224–287 form a multimerization region; the sequence is NYASEILDAI…ITTMKIMDPG (64 aa). The stretch at 226-253 forms a coiled coil; that stretch reads ASEILDAIKALEVRLDRIEGKVDKIMLT.

This sequence belongs to the rubulavirus/avulavirus P protein family. In terms of assembly, homotetramer. Interacts (via multimerization domain) with polymerase L; this interaction forms the polymerase L-P complex. Interacts (via N-terminus) with N0 (via Ncore); this interaction allows P to chaperon N0 to avoid N polymerization before encapsidation. Interacts (via C-terminus) with N-RNA template; this interaction positions the polymerase on the template for both transcription and replication.

Its function is as follows. Essential cofactor of the RNA polymerase L that plays a central role in the transcription and replication by forming the polymerase complex with RNA polymerase L and recruiting L to the genomic N-RNA template for RNA synthesis. Also plays a central role in the encapsidation of nascent RNA chains by forming the encapsidation complex with the nucleocapsid protein N (N-P complex). Acts as a chaperone for newly synthesized free N protein, so-called N0, allowing encapsidation of nascent RNA chains during replication. The nucleoprotein protein N prevents excessive phosphorylation of P, which leads to down-regulation of viral transcription/ replication. Participates, together with N, in the formation of viral factories (viroplasms), which are large inclusions in the host cytoplasm where replication takes place. This Human parainfluenza 4a virus (strain Toshiba) (HPIV-4a) protein is Phosphoprotein (P/V).